We begin with the raw amino-acid sequence, 1217 residues long: MIRNSTNTNNIMETEVALKDWILYYHKLCEVNSGEIFSGNEIITDFDDPVLSDPLLNLKPLPKNEVTVNKDNVIKDNDYSSNGCDFAKSKFHIKGLVGLLTTASVYIGLDNSTNPSYDISQACEFDLEDNTVQQGTGRSANMNPACKVAGFNKSSVRDTIFNIFKIPKKDEKISNDMEVNNTLSRDLDYKKDLFEFVRKYFGISEEETLIGHYTGWLLQEVLIQGNLFITNSSLVYLAHLPKLTDAVVLCGKLKLRSRLKGNPRYWCVLKHSTLALYNDPSDIYFPILSIDLNHVEEISLENSLKDENTMTFVLEASSKNYKFIAGSSHSAKTWVKCLKKQLFSIKNQSKDTIGIKFPISSIIDVECQSYMNQGQSIKVKCFDGNKNYALKEYTFLFFDKDGDSFYNIISNFIPRNMNPVEASLQNSNPTIHLNSKSHFNDKIKILSAVNIDDIICDTDSFEMTSSDILSDIDENIQPLSLKHVRDISNCKNYLKEDLKTSNKMTIQDCNKKVQTSEIQLITYSKHDSRMELNDDSKYYQGNIGNDNKGILSFKNICSIWNTSPIHNKDSDNFFMTSDPFVTSINDTTLAKIKDWFNLHDNEVLHALYYAYLIKGYPVYGKLYVTNRRLYFKSCIPGVNVKMVLPLEDIEGYNEILGTNYGNFGILLTVQNEKELQFGFNSCTNRSDFENVLQRCLDICKYAIKTPELVTSRVIESESEHSRLRFFEEKFSTEGIDIPFLVEDNPYFKTKIMPTKSYNFGFLTIGSRGDVQPYIALAKGLIQEGHSVTIITHREFKSFVECHGIDFKEIAGDPTKLMSLMVEHEAINVGMLMEASSKFRGWIHDLLVTTWEACKNLKLDILIESPSAMAGIHISEALQIPYFRAFTMPWTRTRAYPHAFIVPDQKRGGSFNYLTHVIFENVFWRGICSQVNKWRVQTLGLEKTNLAQLQQNKIPFLYNISPVIFPPAIDFDEWIKVTGYWFLDESESFEPSQELETFISKARKLGKKLVYIGFGSIVVNNAKEMTRAVIDSVLETDIFCILNKGWSERLGKEELRYEEEPEYPETIFLCDSIPHDWLFPKVDAAVHHGGSGTTGATLKAGTPVVIKPFFGDQFFFASRIEDIGAGIALKKLNVSSLSNAIKKVLTDKSIKRKAVSLKKRVAKENGVTTAINCIYSELEYARSLVVKKNHKSSNIEFIQHPNNVNDTTKTVIPLTSMV.

The region spanning 195 to 232 (EFVRKYFGISEEETLIGHYTGWLLQEVLIQGNLFITNS) is the GRAM 1 domain. The PH domain maps to 246-343 (AVVLCGKLKL…WVKCLKKQLF (98 aa)). The GRAM 2 domain occupies 590–656 (AKIKDWFNLH…EDIEGYNEIL (67 aa)). Positions 766, 767, 769, 1042, 1072, 1074, 1087, 1090, 1091, 1092, 1111, and 1112 each coordinate UDP-alpha-D-glucose.

This sequence belongs to the glycosyltransferase 28 family.

Its subcellular location is the cytoplasm. The protein resides in the membrane. It carries out the reaction a sterol + UDP-alpha-D-glucose = a sterol 3-beta-D-glucoside + UDP + H(+). The catalysed reaction is ergosterol + UDP-alpha-D-glucose = ergosteryl 3-beta-D-glucoside + UDP + H(+). In terms of biological role, sterol glycosyltransferase responsible for the glycosylation of ergosterol to form ergosterol-glucoside. The chain is Sterol 3-beta-glucosyltransferase from Vanderwaltozyma polyspora (strain ATCC 22028 / DSM 70294 / BCRC 21397 / CBS 2163 / NBRC 10782 / NRRL Y-8283 / UCD 57-17) (Kluyveromyces polysporus).